Consider the following 383-residue polypeptide: MSPEIALNRISPMLSPFISSVVRNGKVGLDATNCLRITDLKSGCTSLTPGPNCDRFKLHIPYAGETLKWDIIFNAQYPELPPDFIFGEDAEFLPDPSALHNLASWNPSNPECLLLVVKELVQQYHQFQCGRLRESSRLMFEYQTLLEEPQYGENMEIYAGKKNNWTGEFSARFLLKLPVDFSNIPTYLLKDVNEDPGEDVALLSVSFEDTEATQVYPKLYLSPRIEHALGGSSALHIPAFPGGGCLIDYVPQVCHLLTNKVQYVIQGYHKRREYIAAFLSHFGTGVVEYDAEGFTKLTLLLMWKDFCFLVHIDLPLFFPRDQPTLTFQSVYHFTNSGQLYSQAQKNYPYSPRWDGNEMAKRAKAYFKTFVPQFQEAAFANGKL.

Met-1 bears the N-acetylmethionine mark. Ser-2 carries the phosphoserine modification. 2 UEV-like regions span residues 30 to 147 (DATN…TLLE) and 275 to 364 (IAAF…RAKA).

It belongs to the BABAM2 family. In terms of assembly, component of the ARISC complex, at least composed of UIMC1/RAP80, ABRAXAS1, BRCC3/BRCC36, BABAM2 and BABAM1/NBA1. Component of the BRCA1-A complex, at least composed of BRCA1, BARD1, UIMC1/RAP80, ABRAXAS1, BRCC3/BRCC36, BABAM2 and BABAM1/NBA1. In the BRCA1-A complex, interacts directly with ABRAXAS1, BRCC3/BRCC36 and BABAM1/NBA1. Binds polyubiquitin. Component of the BRISC complex, at least composed of ABRAXAS2, BRCC3/BRCC36, BABAM2 and BABAM1/NBA1. Identified in a complex with SHMT2 and the other subunits of the BRISC complex. Component of the BRCA1/BRCA2 containing complex (BRCC), which also contains BRCA1, BRCA2, BARD1, BRCC3/BRCC36 and RAD51. BRCC is a ubiquitin E3 ligase complex that enhances cellular survival following DNA damage. May interact with FAS and TNFRSF1A. In terms of tissue distribution, expressed in brain, heart, kidney, liver, lung, testis, germinal center B-cells and various mouse cell lines.

It localises to the cytoplasm. Its subcellular location is the nucleus. In terms of biological role, component of the BRCA1-A complex, a complex that specifically recognizes 'Lys-63'-linked ubiquitinated histones H2A and H2AX at DNA lesions sites, leading to target the BRCA1-BARD1 heterodimer to sites of DNA damage at double-strand breaks (DSBs). The BRCA1-A complex also possesses deubiquitinase activity that specifically removes 'Lys-63'-linked ubiquitin on histones H2A and H2AX. In the BRCA1-A complex, it acts as an adapter that bridges the interaction between BABAM1/NBA1 and the rest of the complex, thereby being required for the complex integrity and modulating the E3 ubiquitin ligase activity of the BRCA1-BARD1 heterodimer. Probably also plays a role as a component of the BRISC complex, a multiprotein complex that specifically cleaves 'Lys-63'-linked ubiquitin. May regulate TNF-alpha signaling through its interactions with TNFRSF1A. Functionally, component of the BRCA1-A complex, a complex that specifically recognizes 'Lys-63'-linked ubiquitinated histones H2A and H2AX at DNA lesions sites, leading to target the BRCA1-BARD1 heterodimer to sites of DNA damage at double-strand breaks (DSBs). The BRCA1-A complex also possesses deubiquitinase activity that specifically removes 'Lys-63'-linked ubiquitin on histones H2A and H2AX. In the BRCA1-A complex, it acts as an adapter that bridges the interaction between BABAM1/NBA1 and the rest of the complex, thereby being required for the complex integrity and modulating the E3 ubiquitin ligase activity of the BRCA1-BARD1 heterodimer. Component of the BRISC complex, a multiprotein complex that specifically cleaves 'Lys-63'-linked ubiquitin in various substrates. Within the BRISC complex, acts as an adapter that bridges the interaction between BABAM1/NBA1 and the rest of the complex, thereby being required for the complex integrity. The BRISC complex is required for normal mitotic spindle assembly and microtubule attachment to kinetochores via its role in deubiquitinating NUMA1. The BRISC complex plays a role in interferon signaling via its role in the deubiquitination of the interferon receptor IFNAR1; deubiquitination increases IFNAR1 activity by enhancing its stability and cell surface expression. Down-regulates the response to bacterial lipopolysaccharide (LPS) via its role in IFNAR1 deubiquitination. May play a role in homeostasis or cellular differentiation in cells of neural, epithelial and germline origins. May also act as a death receptor-associated anti-apoptotic protein, which inhibits the mitochondrial apoptotic pathway. May regulate TNF-alpha signaling through its interactions with TNFRSF1A; however these effects may be indirect. This is BRISC and BRCA1-A complex member 2 (Babam2) from Mus musculus (Mouse).